Reading from the N-terminus, the 180-residue chain is Molybdopterin synthase catalytic subunit (180 aa).

Substrate contacts are provided by residues 123–124, K139, and 146–148; these read HR and KLE. The interval 161–180 is disordered; the sequence is RDGQKGVKVEGGKEGVEAKH.

It belongs to the MoaE family. MOCS2B subfamily. Heterotetramer; composed of 2 small (MOCS2A) and 2 large (MOCS2B) subunits.

It localises to the cytoplasm. The catalysed reaction is 2 [molybdopterin-synthase sulfur-carrier protein]-C-terminal-Gly-aminoethanethioate + cyclic pyranopterin phosphate + H2O = molybdopterin + 2 [molybdopterin-synthase sulfur-carrier protein]-C-terminal Gly-Gly + 2 H(+). It functions in the pathway cofactor biosynthesis; molybdopterin biosynthesis. In terms of biological role, catalytic subunit of the molybdopterin synthase complex, a complex that catalyzes the conversion of precursor Z into molybdopterin. Acts by mediating the incorporation of 2 sulfur atoms from thiocarboxylated MOCS2A into precursor Z to generate a dithiolene group. The polypeptide is Molybdopterin synthase catalytic subunit (Pyrenophora tritici-repentis (strain Pt-1C-BFP) (Wheat tan spot fungus)).